The chain runs to 705 residues: Polyribonucleotide nucleotidyltransferase (705 aa).

2 residues coordinate Mg(2+): Asp-486 and Asp-492. Positions 553-612 (PQFHTMKVDPEKIRDIIGKGGATIRSITEETGASIDIDDDGTVKIYGDDGDSLQGAINRI) constitute a KH domain. The region spanning 622–690 (GEVYKGKVVR…QRGRIKLSIK (69 aa)) is the S1 motif domain.

Belongs to the polyribonucleotide nucleotidyltransferase family. As to quaternary structure, component of the RNA degradosome, which is a multiprotein complex involved in RNA processing and mRNA degradation. The cofactor is Mg(2+).

It is found in the cytoplasm. It catalyses the reaction RNA(n+1) + phosphate = RNA(n) + a ribonucleoside 5'-diphosphate. Its function is as follows. Involved in mRNA degradation. Catalyzes the phosphorolysis of single-stranded polyribonucleotides processively in the 3'- to 5'-direction. The chain is Polyribonucleotide nucleotidyltransferase from Teredinibacter turnerae (strain ATCC 39867 / T7901).